The following is a 227-amino-acid chain: Protein GrpE (227 aa).

Polar residues predominate over residues 1–18 (MTQGNQKTEGNPPEQVTV). Disordered stretches follow at residues 1–57 (MTQG…GAAT) and 193–227 (TEEG…ASGD). Positions 19 to 35 (TDKRRIDPETGEVRHVP) are enriched in basic and acidic residues. Composition is skewed to low complexity over residues 41–50 (GGTAPQAATA) and 199–213 (EAAA…AAET).

It belongs to the GrpE family. In terms of assembly, homodimer.

It localises to the cytoplasm. Participates actively in the response to hyperosmotic and heat shock by preventing the aggregation of stress-denatured proteins, in association with DnaK and GrpE. It is the nucleotide exchange factor for DnaK and may function as a thermosensor. Unfolded proteins bind initially to DnaJ; upon interaction with the DnaJ-bound protein, DnaK hydrolyzes its bound ATP, resulting in the formation of a stable complex. GrpE releases ADP from DnaK; ATP binding to DnaK triggers the release of the substrate protein, thus completing the reaction cycle. Several rounds of ATP-dependent interactions between DnaJ, DnaK and GrpE are required for fully efficient folding. This Mycolicibacterium paratuberculosis (strain ATCC BAA-968 / K-10) (Mycobacterium paratuberculosis) protein is Protein GrpE.